Here is a 304-residue protein sequence, read N- to C-terminus: DnaJ homolog subfamily C member 17 (304 aa).

Residues 11-76 enclose the J domain; it reads DLYALLGIEE…AARAAYDKVR (66 aa). A compositionally biased stretch (basic and acidic residues) spans 79–106; sequence KKQAAERTQKLDEKRKKVKLDLEARERQ. Positions 79–145 are disordered; it reads KKQAAERTQK…SRQLEEQQRL (67 aa). Residue Ser112 is modified to Phosphoserine. Residues 118–145 show a composition bias toward basic and acidic residues; the sequence is SRSTRTLEQEIERLREEGSRQLEEQQRL. The 72-residue stretch at 178-249 folds into the RRM domain; it reads KCKKEDESKG…NPLKISWLEG (72 aa). Position 264 is an N6-methyllysine (Lys264).

It is found in the cytoplasm. It localises to the nucleus. In terms of biological role, may negatively affect PAX8-induced thyroglobulin/TG transcription. The protein is DnaJ homolog subfamily C member 17 (DNAJC17) of Homo sapiens (Human).